Here is a 475-residue protein sequence, read N- to C-terminus: Ribulose bisphosphate carboxylase large chain (475 aa).

A propeptide spanning residues 1–2 (MS) is cleaved from the precursor. Proline 3 is modified (N-acetylproline). An N6,N6,N6-trimethyllysine modification is found at lysine 14. Substrate-binding residues include asparagine 123 and threonine 173. The active-site Proton acceptor is lysine 175. Lysine 177 is a binding site for substrate. Mg(2+)-binding residues include lysine 201, aspartate 203, and glutamate 204. Lysine 201 carries the N6-carboxylysine modification. Histidine 294 acts as the Proton acceptor in catalysis. Substrate is bound by residues arginine 295, histidine 327, and serine 379.

This sequence belongs to the RuBisCO large chain family. Type I subfamily. In terms of assembly, heterohexadecamer of 8 large chains and 8 small chains. It depends on Mg(2+) as a cofactor.

The protein resides in the plastid. It is found in the chloroplast. The catalysed reaction is 2 (2R)-3-phosphoglycerate + 2 H(+) = D-ribulose 1,5-bisphosphate + CO2 + H2O. It carries out the reaction D-ribulose 1,5-bisphosphate + O2 = 2-phosphoglycolate + (2R)-3-phosphoglycerate + 2 H(+). Functionally, ruBisCO catalyzes two reactions: the carboxylation of D-ribulose 1,5-bisphosphate, the primary event in carbon dioxide fixation, as well as the oxidative fragmentation of the pentose substrate in the photorespiration process. Both reactions occur simultaneously and in competition at the same active site. The protein is Ribulose bisphosphate carboxylase large chain of Bazzania trilobata (Greater whipwort).